The sequence spans 268 residues: Probable 1-acyl-sn-glycerol-3-phosphate acyltransferase (268 aa).

Positions His-92–Asp-97 match the HXXXXD motif motif.

Belongs to the 1-acyl-sn-glycerol-3-phosphate acyltransferase family.

The catalysed reaction is a 1-acyl-sn-glycero-3-phosphate + an acyl-CoA = a 1,2-diacyl-sn-glycero-3-phosphate + CoA. The protein operates within phospholipid metabolism; CDP-diacylglycerol biosynthesis; CDP-diacylglycerol from sn-glycerol 3-phosphate: step 2/3. In terms of biological role, converts lysophosphatidic acid (LPA) into phosphatidic acid by incorporating acyl moiety at the 2 position. In Mycoplasma genitalium (strain ATCC 33530 / DSM 19775 / NCTC 10195 / G37) (Mycoplasmoides genitalium), this protein is Probable 1-acyl-sn-glycerol-3-phosphate acyltransferase (plsC).